Consider the following 311-residue polypeptide: Olfactory receptor 52J3 (311 aa).

Over 1–27 (MFYHNKSIFHPVTFFLIGIPGLEDFHM) the chain is Extracellular. N5 carries N-linked (GlcNAc...) asparagine glycosylation. Residues 28–48 (WISGPFCSVYLVALLGNATIL) traverse the membrane as a helical segment. The Cytoplasmic portion of the chain corresponds to 49–56 (LVIKVEQT). Residues 57-77 (LREPMFYFLAILSTIDLALST) traverse the membrane as a helical segment. The Extracellular portion of the chain corresponds to 78 to 101 (TSVPRMLGIFWFDAHEINYGACVA). A disulfide bond links C99 and C191. The helical transmembrane segment at 102-122 (QMFLIHAFTGMEAEVLLAMAF) threads the bilayer. The Cytoplasmic portion of the chain corresponds to 123 to 141 (DRYVAVCAPLHYATILTSQ). The chain crosses the membrane as a helical span at residues 142-162 (VLVGISMCIVIRPVLLTLPMV). At 163-198 (YLIYRLPFCQAHIIAHSYCEHMGIAKLSCGNIRING) the chain is on the extracellular side. Residues 199–218 (IYGLFVVSFFVLNLVLIGIS) traverse the membrane as a helical segment. Topologically, residues 219 to 238 (YVYILRAVFRLPSHDAQLKA) are cytoplasmic. Residues 239 to 259 (LSTCGAHVGVICVFYIPSVFS) form a helical membrane-spanning segment. The Extracellular segment spans residues 260-274 (FLTHRFGHQIPGYIH). A helical transmembrane segment spans residues 275 to 295 (ILVANLYLIIPPSLNPIIYGV). Residues 296–311 (RTKQIRERVLYVFTKK) are Cytoplasmic-facing.

This sequence belongs to the G-protein coupled receptor 1 family.

The protein localises to the cell membrane. In terms of biological role, odorant receptor. The polypeptide is Olfactory receptor 52J3 (OR52J3) (Homo sapiens (Human)).